The following is a 126-amino-acid chain: Autophagy-related protein 8-like protein DDB_G0290491 (126 aa).

Glycine 123 is lipidated: Phosphatidylethanolamine amidated glycine. Residues 124–126 constitute a propeptide, removed in mature form; that stretch reads SDI.

The protein belongs to the ATG8 family.

The protein resides in the membrane. The chain is Autophagy-related protein 8-like protein DDB_G0290491 from Dictyostelium discoideum (Social amoeba).